Reading from the N-terminus, the 899-residue chain is Bifunctional uridylyltransferase/uridylyl-removing enzyme (899 aa).

Residues 1–347 are uridylyltransferase; sequence MFISDPTDSL…PESERPEKSV (347 aa). The tract at residues 348–718 is uridylyl-removing; that stretch reads LNARFNRVGD…EHRELALDAV (371 aa). One can recognise an HD domain in the interval 465 to 581; that stretch reads VDAHILLLIR…TKFANLVGNV (117 aa). ACT domains follow at residues 719–804 and 827–899; these read QIFI…RLPR and VMSL…TPSC.

Belongs to the GlnD family. It depends on Mg(2+) as a cofactor.

It carries out the reaction [protein-PII]-L-tyrosine + UTP = [protein-PII]-uridylyl-L-tyrosine + diphosphate. The catalysed reaction is [protein-PII]-uridylyl-L-tyrosine + H2O = [protein-PII]-L-tyrosine + UMP + H(+). Its activity is regulated as follows. Uridylyltransferase (UTase) activity is inhibited by glutamine, while glutamine activates uridylyl-removing (UR) activity. Functionally, modifies, by uridylylation and deuridylylation, the PII regulatory proteins (GlnB and homologs), in response to the nitrogen status of the cell that GlnD senses through the glutamine level. Under low glutamine levels, catalyzes the conversion of the PII proteins and UTP to PII-UMP and PPi, while under higher glutamine levels, GlnD hydrolyzes PII-UMP to PII and UMP (deuridylylation). Thus, controls uridylylation state and activity of the PII proteins, and plays an important role in the regulation of nitrogen assimilation and metabolism. This is Bifunctional uridylyltransferase/uridylyl-removing enzyme from Psychrobacter sp. (strain PRwf-1).